We begin with the raw amino-acid sequence, 265 residues long: Polyphosphate glucokinase (265 aa).

The span at 1–18 (MTSTGPETSETPGATTQR) shows a compositional bias: polar residues. Residues 1-22 (MTSTGPETSETPGATTQRHGFG) are disordered. 24 to 29 (DVGGSG) lines the ATP pocket.

It belongs to the ROK (NagC/XylR) family. In terms of assembly, homodimer.

The enzyme catalyses [phosphate](n) + D-glucose = [phosphate](n-1) + D-glucose 6-phosphate + H(+). It catalyses the reaction D-glucose + ATP = D-glucose 6-phosphate + ADP + H(+). Functionally, catalyzes the phosphorylation of glucose using polyphosphate or ATP as the phosphoryl donor. Polyphosphate, rather than ATP, seems to be the major phosphate donor for the enzyme in M.tuberculosis. GTP, UTP and CTP can replace ATP as phosphoryl donor. The chain is Polyphosphate glucokinase (ppgK) from Mycobacterium tuberculosis (strain ATCC 25177 / H37Ra).